Here is a 476-residue protein sequence, read N- to C-terminus: tRNA(Ile)-lysidine synthase (476 aa).

Position 30–35 (30–35 (SGGPDS)) interacts with ATP.

This sequence belongs to the tRNA(Ile)-lysidine synthase family.

The protein localises to the cytoplasm. The catalysed reaction is cytidine(34) in tRNA(Ile2) + L-lysine + ATP = lysidine(34) in tRNA(Ile2) + AMP + diphosphate + H(+). Functionally, ligates lysine onto the cytidine present at position 34 of the AUA codon-specific tRNA(Ile) that contains the anticodon CAU, in an ATP-dependent manner. Cytidine is converted to lysidine, thus changing the amino acid specificity of the tRNA from methionine to isoleucine. The polypeptide is tRNA(Ile)-lysidine synthase (Bacillus cereus (strain ATCC 10987 / NRS 248)).